A 396-amino-acid polypeptide reads, in one-letter code: Cysteine desulfurase (396 aa).

Residues 71–72 (GT), asparagine 148, glutamine 176, and 196–198 (SGH) each bind pyridoxal 5'-phosphate. Lysine 199 carries the post-translational modification N6-(pyridoxal phosphate)lysine. Residue threonine 231 participates in pyridoxal 5'-phosphate binding. Catalysis depends on cysteine 319, which acts as the Cysteine persulfide intermediate. [2Fe-2S] cluster is bound at residue cysteine 319.

It belongs to the class-V pyridoxal-phosphate-dependent aminotransferase family. NifS/IscS subfamily. In terms of assembly, homodimer. Pyridoxal 5'-phosphate is required as a cofactor.

The enzyme catalyses (sulfur carrier)-H + L-cysteine = (sulfur carrier)-SH + L-alanine. In terms of biological role, catalyzes the removal of elemental sulfur atoms from cysteine to produce alanine. Seems to participate in the biosynthesis of the nitrogenase metalloclusters by providing the inorganic sulfur required for the Fe-S core formation. The polypeptide is Cysteine desulfurase (Azotobacter chroococcum mcd 1).